The primary structure comprises 417 residues: MNIDIANQLRAAKKATTDLNLIQSDTRTIILKTLAANLEKHIENIIQENQKDLSLMLEQDPRYDRLLLNKERILSLANDVRKVADLPNPLGVNLLEKSMPNGLSIKKITVPLGVIAVIYESRPNVTIDIFSLCFKSGNVCILKGGKEAHFTNSYLLLLIKNTLKNFNINTDIVCLLPPERALMTQLLNATGLVDLCIPRGSQNLINFVRDNAKIPVIETGAGIVHTYFDKSGDLGKGKKIINNAKTRRVSVCNALDTLIIHADRLKDLPELVETLSQKNVIIYADQDAYQVLDKNYPKQLLIKAKPQDFGHEFLDYKLAIKTVPNIKAAIDHIQQFSSHHSEAVIAEDESAIDKFLTEVDAAAVYANASTSFTDGGEFGLGAEIGISTQKVHARGPMGLDALTSYKWVIRGTGQIRN.

Belongs to the gamma-glutamyl phosphate reductase family.

It is found in the cytoplasm. It catalyses the reaction L-glutamate 5-semialdehyde + phosphate + NADP(+) = L-glutamyl 5-phosphate + NADPH + H(+). Its pathway is amino-acid biosynthesis; L-proline biosynthesis; L-glutamate 5-semialdehyde from L-glutamate: step 2/2. Its function is as follows. Catalyzes the NADPH-dependent reduction of L-glutamate 5-phosphate into L-glutamate 5-semialdehyde and phosphate. The product spontaneously undergoes cyclization to form 1-pyrroline-5-carboxylate. The protein is Gamma-glutamyl phosphate reductase of Legionella pneumophila (strain Corby).